The chain runs to 882 residues: DNA mismatch repair protein MutS (882 aa).

656–663 (GPNASGKS) contacts ATP.

Belongs to the DNA mismatch repair MutS family.

This protein is involved in the repair of mismatches in DNA. It is possible that it carries out the mismatch recognition step. This protein has a weak ATPase activity. This is DNA mismatch repair protein MutS from Synechococcus sp. (strain ATCC 27144 / PCC 6301 / SAUG 1402/1) (Anacystis nidulans).